A 311-amino-acid chain; its full sequence is tRNA-cytidine(32) 2-sulfurtransferase (311 aa).

Residues 47–52 carry the PP-loop motif motif; the sequence is SGGKDS. Cys122, Cys125, and Cys213 together coordinate [4Fe-4S] cluster.

The protein belongs to the TtcA family. In terms of assembly, homodimer. Requires Mg(2+) as cofactor. [4Fe-4S] cluster is required as a cofactor.

Its subcellular location is the cytoplasm. The catalysed reaction is cytidine(32) in tRNA + S-sulfanyl-L-cysteinyl-[cysteine desulfurase] + AH2 + ATP = 2-thiocytidine(32) in tRNA + L-cysteinyl-[cysteine desulfurase] + A + AMP + diphosphate + H(+). Its pathway is tRNA modification. In terms of biological role, catalyzes the ATP-dependent 2-thiolation of cytidine in position 32 of tRNA, to form 2-thiocytidine (s(2)C32). The sulfur atoms are provided by the cysteine/cysteine desulfurase (IscS) system. This chain is tRNA-cytidine(32) 2-sulfurtransferase, found in Escherichia coli (strain 55989 / EAEC).